The primary structure comprises 35 residues: Potassium channel toxin (35 aa).

3 disulfides stabilise this stretch: cysteine 6-cysteine 25, cysteine 11-cysteine 30, and cysteine 15-cysteine 32.

This sequence belongs to the short scorpion toxin superfamily. Potassium channel inhibitor family. Alpha-KTx 21 subfamily. In terms of tissue distribution, expressed by the venom gland.

The protein localises to the secreted. Functionally, toxin that blocks voltage-gated potassium channels (Kv). This Tityus metuendus (Scorpion) protein is Potassium channel toxin.